The sequence spans 142 residues: Coactosin-like protein (142 aa).

Ala-2 bears the N-acetylalanine mark. The ADF-H domain maps to Ala-2–Lys-130. Residues Thr-66–Lys-75 are flexible and important for F-actin binding. N6-acetyllysine is present on residues Lys-102 and Lys-126.

Belongs to the actin-binding proteins ADF family. Coactosin subfamily. As to quaternary structure, interacts with 5-lipoxygenase (ALOX5/5LO) in a calcium-independent manner. Binds to F-actin with a stoichiometry of 1:2. In terms of tissue distribution, widely expressed with highest levels in placenta, lung, kidney and peripheral blood leukocytes and lower levels in brain, liver and pancreas.

The protein localises to the cytoplasm. It localises to the cytoskeleton. Its subcellular location is the nucleus. Binds to F-actin in a calcium-independent manner. Has no direct effect on actin depolymerization. Acts as a chaperone for ALOX5 (5LO), influencing both its stability and activity in leukotrienes synthesis. The chain is Coactosin-like protein (COTL1) from Homo sapiens (Human).